Consider the following 131-residue polypeptide: D-ribose pyranase (131 aa).

H20 (proton donor) is an active-site residue. Substrate is bound by residues D28, H98, and 120-122 (YAN).

The protein belongs to the RbsD / FucU family. RbsD subfamily. Homodecamer.

It is found in the cytoplasm. The catalysed reaction is beta-D-ribopyranose = beta-D-ribofuranose. It participates in carbohydrate metabolism; D-ribose degradation; D-ribose 5-phosphate from beta-D-ribopyranose: step 1/2. In terms of biological role, catalyzes the interconversion of beta-pyran and beta-furan forms of D-ribose. The sequence is that of D-ribose pyranase from Bacillus mycoides (strain KBAB4) (Bacillus weihenstephanensis).